The chain runs to 567 residues: Potassium-transporting ATPase potassium-binding subunit (567 aa).

Helical transmembrane passes span methionine 3–leucine 23, leucine 64–valine 84, glycine 136–isoleucine 156, leucine 179–proline 199, valine 220–phenylalanine 240, leucine 254–phenylalanine 274, tryptophan 285–alanine 305, phenylalanine 330–valine 350, isoleucine 374–isoleucine 394, alanine 420–valine 440, leucine 488–glycine 508, and glycine 527–phenylalanine 547.

This sequence belongs to the KdpA family. The system is composed of three essential subunits: KdpA, KdpB and KdpC.

It is found in the cell inner membrane. Functionally, part of the high-affinity ATP-driven potassium transport (or Kdp) system, which catalyzes the hydrolysis of ATP coupled with the electrogenic transport of potassium into the cytoplasm. This subunit binds the periplasmic potassium ions and delivers the ions to the membrane domain of KdpB through an intramembrane tunnel. This chain is Potassium-transporting ATPase potassium-binding subunit, found in Bradyrhizobium diazoefficiens (strain JCM 10833 / BCRC 13528 / IAM 13628 / NBRC 14792 / USDA 110).